We begin with the raw amino-acid sequence, 313 residues long: LOB domain-containing protein 36 (313 aa).

Residues 6–107 (SPCAACKFLR…HDLENAKKEL (102 aa)) enclose the LOB domain. Positions 245–313 (GNFVDSPSTN…SEEGRRNVIG (69 aa)) are disordered. The span at 249–260 (DSPSTNNNYHTD) shows a compositional bias: polar residues. Low complexity predominate over residues 280 to 302 (PSQSSQPLPLQTQETQTQTQPNS).

Belongs to the LOB domain-containing protein family. Expressed in trichomes, at the base of many lateral organs, including branching points of the inflorescence and floral organs and in the distal part of the pistil at stages when style and stigma start to develop. Also detected in pedicels and at the base of petals and sepals.

Controls the proximal-distal patterning in petals and the adaxial-abaxial determination of leaves. Involved in the repression of the homeobox gene BP. The sequence is that of LOB domain-containing protein 36 (LBD36) from Arabidopsis thaliana (Mouse-ear cress).